Consider the following 293-residue polypeptide: 4-diphosphocytidyl-2-C-methyl-D-erythritol kinase (293 aa).

Lysine 16 is an active-site residue. Residue 99-109 (PMGAGLGGGSS) coordinates ATP. Aspartate 141 is a catalytic residue.

This sequence belongs to the GHMP kinase family. IspE subfamily.

It carries out the reaction 4-CDP-2-C-methyl-D-erythritol + ATP = 4-CDP-2-C-methyl-D-erythritol 2-phosphate + ADP + H(+). Its pathway is isoprenoid biosynthesis; isopentenyl diphosphate biosynthesis via DXP pathway; isopentenyl diphosphate from 1-deoxy-D-xylulose 5-phosphate: step 3/6. In terms of biological role, catalyzes the phosphorylation of the position 2 hydroxy group of 4-diphosphocytidyl-2C-methyl-D-erythritol. The sequence is that of 4-diphosphocytidyl-2-C-methyl-D-erythritol kinase from Paraburkholderia phytofirmans (strain DSM 17436 / LMG 22146 / PsJN) (Burkholderia phytofirmans).